Reading from the N-terminus, the 366-residue chain is Putative zinc metalloprotease slr1821 (366 aa).

Histidine 20 provides a ligand contact to Zn(2+). Glutamate 21 is an active-site residue. Histidine 24 contributes to the Zn(2+) binding site. Helical transmembrane passes span 95–115 (AIVISAGVIANLVFAYFLLIG), 293–313 (AVINILPLPALDGGQLVFLLI), and 325–345 (FQMGVMQTGLVLLLSLGVFLI). One can recognise a PDZ domain in the interval 106–188 (LVFAYFLLIG…VPITVEVQRG (83 aa)).

It belongs to the peptidase M50B family. Zn(2+) is required as a cofactor.

The protein localises to the cell inner membrane. In Synechocystis sp. (strain ATCC 27184 / PCC 6803 / Kazusa), this protein is Putative zinc metalloprotease slr1821.